Reading from the N-terminus, the 96-residue chain is Small ribosomal subunit protein bS6c (96 aa).

It belongs to the bacterial ribosomal protein bS6 family.

Its subcellular location is the plastid. It localises to the chloroplast. Functionally, binds together with bS18 to 16S ribosomal RNA. The chain is Small ribosomal subunit protein bS6c (rps6) from Trieres chinensis (Marine centric diatom).